The sequence spans 141 residues: Probable trafficking protein particle complex subunit 2 (141 aa).

It belongs to the TRAPP small subunits family. Sedlin subfamily. Part of the multisubunit TRAPP (transport protein particle) complex.

It localises to the cytoplasm. Its subcellular location is the perinuclear region. It is found in the endoplasmic reticulum. The protein localises to the golgi apparatus. In terms of biological role, may play a role in vesicular transport from endoplasmic reticulum to Golgi. Required for the systemic spread of the RNAi response. This is Probable trafficking protein particle complex subunit 2 (sedl-1) from Caenorhabditis elegans.